The primary structure comprises 387 residues: GDP-mannose transporter (387 aa).

Positions 1 to 25 (MADTKKNDNYAIDMDKLDAESDRFR) are enriched in basic and acidic residues. Topologically, residues 1–42 (MADTKKNDNYAIDMDKLDAESDRFRPPPQPQPRHSSSSHSQS) are cytoplasmic. Residues 1–45 (MADTKKNDNYAIDMDKLDAESDRFRPPPQPQPRHSSSSHSQSISN) are disordered. Positions 32–45 (PRHSSSSHSQSISN) are enriched in low complexity. The helical transmembrane segment at 43 to 63 (ISNSPVLPILSYCASSILMTV) threads the bilayer. Over 64-71 (TNKYVLSG) the chain is Lumenal. Residues 72–92 (VQFNLNFFLLCVQSVVCIIAI) form a helical membrane-spanning segment. At 93–112 (QTCKSMGLINYRDFNSDEAK) the chain is on the cytoplasmic side. A helical transmembrane segment spans residues 113–129 (KWFPISLLLIGMIYTGT). Residues 130 to 136 (KALKFLS) lie on the Lumenal side of the membrane. The helical transmembrane segment at 137–153 (IPVYTIFKNLTIILIAY) threads the bilayer. Topologically, residues 154–162 (GEVLWFGGS) are cytoplasmic. The chain crosses the membrane as a helical span at residues 163–184 (VTGMALFSFGLMVLSSVIAAWA). At 185–206 (DIKHALDTSGFSGAEATSKIST) the chain is on the lumenal side. The chain crosses the membrane as a helical span at residues 207–227 (LNAGYIWMLINCLCTSTYILG). Topologically, residues 228 to 241 (MRKRIKLTNFKDFD) are cytoplasmic. The helical transmembrane segment at 242 to 262 (TMFYNNLLSIPILMIGSFIVE) threads the bilayer. The Lumenal portion of the chain corresponds to 263-280 (DWSSENINKNFPIETRNS). A helical membrane pass occupies residues 281-301 (LIFAMIFSGLSSVFISYTSAW). Residues 302–309 (CVRVTSST) are Cytoplasmic-facing. The helical transmembrane segment at 310-329 (TYSMVGALNKLPIALSGLIF) threads the bilayer. At 330-332 (FGD) the chain is on the lumenal side. The helical transmembrane segment at 333-355 (PVTVPSVSAIVVGFISGIVYSLA) threads the bilayer. The Cytoplasmic segment spans residues 356-387 (KVKQNAKPRTGVLPTTNPVSASTQSMRDGLKS). Positions 366 to 387 (GVLPTTNPVSASTQSMRDGLKS) are disordered. Residues 368–381 (LPTTNPVSASTQSM) are compositionally biased toward polar residues.

It belongs to the TPT transporter family. SLC35D subfamily. As to quaternary structure, homooligomer.

The protein localises to the golgi apparatus membrane. Its subcellular location is the cytoplasmic vesicle membrane. It is found in the endoplasmic reticulum membrane. In terms of biological role, involved in the import of GDP-mannose from the cytoplasm into the Golgi lumen. This Coccidioides immitis (strain RS) (Valley fever fungus) protein is GDP-mannose transporter (VRG4).